Here is a 360-residue protein sequence, read N- to C-terminus: Ferredoxin--NADP reductase, leaf isozyme 1, chloroplastic (360 aa).

A chloroplast-targeting transit peptide spans 1 to 49 (MAAAISAAVSLPSSKSSSLLTKISSVSPQRIFLKKSTVCYRRVVSVKAQ). The 123-residue stretch at 81 to 203 (KNPYTGRCLL…TGPVGKEMLM (123 aa)) folds into the FAD-binding FR-type domain. FAD contacts are provided by residues 139 to 142 (RLYS), 160 to 162 (CVK), Y166, and 177 to 179 (VCS). Residues S142 and K162 each contribute to the NADP(+) site. C178 and C183 are joined by a disulfide. The residue at position 179 (S179) is a Phosphoserine. The residue at position 210 (T210) is a Phosphothreonine. T218 serves as a coordination point for FAD. NADP(+) contacts are provided by residues T218, 250–251 (VP), 280–281 (SR), K290, 319–320 (GL), and E358.

This sequence belongs to the ferredoxin--NADP reductase type 1 family. In terms of assembly, heterodimer with LFNR2. Interacts with PGRL1A and PGRL1B. Interacts with TIC62. Component of high molecular weight thylakoid LFNRs-containing protein complexes containing LIR1, LFNR1, LFNR2, TIC62 and TROL proteins. Interacts directly with LIR1 and TIC62; LIR1 increases the affinity of LFNR1 and LFNR2 for TIC62. Binds to YCF54 in chloroplasts. The cofactor is FAD. In terms of processing, may form interchain disulfide bonds with LIR1. In terms of tissue distribution, expressed in shoots. Restricted to green tissues, being more abundant in siliques.

Its subcellular location is the plastid. The protein resides in the chloroplast stroma. It localises to the chloroplast thylakoid membrane. The enzyme catalyses 2 reduced [2Fe-2S]-[ferredoxin] + NADP(+) + H(+) = 2 oxidized [2Fe-2S]-[ferredoxin] + NADPH. Its pathway is energy metabolism; photosynthesis. Its function is as follows. Plays a key role in regulating the relative amounts of cyclic and non-cyclic electron flow to meet the demands of the plant for ATP and reducing power. Probable electron donor required for the MgProto monomethylester (MgProtoME) cyclase complex reaction to form protochlorophyllide, thus connecting chlorophyll synthesis with photosynthetic activity. In Arabidopsis thaliana (Mouse-ear cress), this protein is Ferredoxin--NADP reductase, leaf isozyme 1, chloroplastic.